Reading from the N-terminus, the 321-residue chain is UDP-3-O-acylglucosamine N-acyltransferase (321 aa).

The active-site Proton acceptor is H231.

This sequence belongs to the transferase hexapeptide repeat family. LpxD subfamily. In terms of assembly, homotrimer.

The catalysed reaction is a UDP-3-O-[(3R)-3-hydroxyacyl]-alpha-D-glucosamine + a (3R)-hydroxyacyl-[ACP] = a UDP-2-N,3-O-bis[(3R)-3-hydroxyacyl]-alpha-D-glucosamine + holo-[ACP] + H(+). It participates in bacterial outer membrane biogenesis; LPS lipid A biosynthesis. Its function is as follows. Catalyzes the N-acylation of UDP-3-O-acylglucosamine using 3-hydroxyacyl-ACP as the acyl donor. Is involved in the biosynthesis of lipid A, a phosphorylated glycolipid that anchors the lipopolysaccharide to the outer membrane of the cell. The polypeptide is UDP-3-O-acylglucosamine N-acyltransferase (Campylobacter jejuni subsp. jejuni serotype O:2 (strain ATCC 700819 / NCTC 11168)).